A 251-amino-acid chain; its full sequence is Small ribosomal subunit protein uS2 (251 aa).

This sequence belongs to the universal ribosomal protein uS2 family.

This Arthrospira platensis (Spirulina platensis) protein is Small ribosomal subunit protein uS2 (rpsB).